The chain runs to 200 residues: Holliday junction branch migration complex subunit RuvA (200 aa).

Residues 1-65 form a domain I region; the sequence is MYEYIKGTLT…ETEHVLYGFS (65 aa). A domain II region spans residues 66 to 144; the sequence is SRAERECFRL…TLMPLYLEEP (79 aa). The interval 145–149 is flexible linker; sequence VVPSS. The domain III stretch occupies residues 150–200; the sequence is TANSSFKEGIGALMNLGFSRLAADRMMTEAVKELSEEASVAELLPIALRKS.

Belongs to the RuvA family. As to quaternary structure, homotetramer. Forms an RuvA(8)-RuvB(12)-Holliday junction (HJ) complex. HJ DNA is sandwiched between 2 RuvA tetramers; dsDNA enters through RuvA and exits via RuvB. An RuvB hexamer assembles on each DNA strand where it exits the tetramer. Each RuvB hexamer is contacted by two RuvA subunits (via domain III) on 2 adjacent RuvB subunits; this complex drives branch migration. In the full resolvosome a probable DNA-RuvA(4)-RuvB(12)-RuvC(2) complex forms which resolves the HJ.

It localises to the cytoplasm. Functionally, the RuvA-RuvB-RuvC complex processes Holliday junction (HJ) DNA during genetic recombination and DNA repair, while the RuvA-RuvB complex plays an important role in the rescue of blocked DNA replication forks via replication fork reversal (RFR). RuvA specifically binds to HJ cruciform DNA, conferring on it an open structure. The RuvB hexamer acts as an ATP-dependent pump, pulling dsDNA into and through the RuvAB complex. HJ branch migration allows RuvC to scan DNA until it finds its consensus sequence, where it cleaves and resolves the cruciform DNA. This is Holliday junction branch migration complex subunit RuvA from Chlamydia trachomatis serovar D (strain ATCC VR-885 / DSM 19411 / UW-3/Cx).